The sequence spans 171 residues: Transcriptional repressor NrdR (171 aa).

The segment covering 1–10 (MQCPHCHHNG) has biased composition (basic residues). Residues 1–21 (MQCPHCHHNGSRVVDSRPTDD) are disordered. A zinc finger lies at 3–34 (CPHCHHNGSRVVDSRPTDDGRVIRRRRECENC). One can recognise an ATP-cone domain in the interval 49–139 (LLVIKKNGAR…VYRQFKDMHV (91 aa)). A disordered region spans residues 152–171 (KVKLAKPSAKTTHAPKRKKD).

The protein belongs to the NrdR family. It depends on Zn(2+) as a cofactor.

Negatively regulates transcription of bacterial ribonucleotide reductase nrd genes and operons by binding to NrdR-boxes. The sequence is that of Transcriptional repressor NrdR from Lactiplantibacillus plantarum (strain ATCC BAA-793 / NCIMB 8826 / WCFS1) (Lactobacillus plantarum).